The chain runs to 519 residues: Na(+)/H(+) exchange regulatory cofactor NHE-RF3 (519 aa).

PDZ domains follow at residues 9 to 90 (ECKL…LDGD), 134 to 215 (RLCY…VDKE), and 243 to 323 (IVEM…VDKE). Residues serine 148, serine 192, serine 250, serine 334, and serine 348 each carry the phosphoserine modification. The tract at residues 347–374 (GSVKEAPAPTPTSLEVSSPPDTTEEVDH) is disordered. The segment covering 357–367 (PTSLEVSSPPD) has biased composition (polar residues). In terms of domain architecture, PDZ 4 spans 378 to 458 (LCRLAKGENG…NVTLLVCGKK (81 aa)). At threonine 451 the chain carries Phosphothreonine. Residues 473–519 (SLADPPDTPPDSKEGIVVESKHDSHMAKERAHSTASHSSSNSEDTEM) are disordered. Residues 482 to 504 (PDSKEGIVVESKHDSHMAKERAH) show a composition bias toward basic and acidic residues. Phosphoserine is present on residues serine 492, serine 508, serine 510, serine 511, serine 512, and serine 514. Low complexity predominate over residues 505–519 (STASHSSSNSEDTEM).

Belongs to the NHER family. Interacts with PDZK1IP1 and ABCC2. Binds to the C-terminal region of SLC26A3. Interacts (via PDZ domains 1 and 3) with SCARB1 (C-terminal domain). Forms a heterodimeric complex with NHERF1. Interacts with AKAP2, BCR, CFTR, SLCO1A1, SLC22A12, SLC22A4, SLC22A5, NHERF2 and SLC17A1. Component of a complex, composed of PDZK1, SYNGAP1, KLHL17 and NMDA receptors. Interacts (via PDZ1 domain) directly with KLHL17; the interaction is important for integrity of actin cytoskeleton structures in neurons. Interacts (via C-terminal PDZ domain) with SLC26A6 (via C-terminal domain). Interacts (via C-terminal PDZ domain) with SLC9A3 (via C-terminal domain). Interacts (via the first PDZ domain) with PTGIR (via non-isoprenylated C-terminus). Interacts (via PDZ domains 1 and 3) with SLC5A8 (via PDZ-binding motif); interaction increases nicotinate transport activity of SLC5A8.

The protein localises to the membrane. It is found in the cell membrane. A scaffold protein that connects plasma membrane proteins and regulatory components, regulating their surface expression in epithelial cells apical domains. May be involved in the coordination of a diverse range of regulatory processes for ion transport and second messenger cascades. In complex with NHERF1, may cluster proteins that are functionally dependent in a mutual fashion and modulate the trafficking and the activity of the associated membrane proteins. May play a role in the cellular mechanisms associated with multidrug resistance through its interaction with ABCC2 and PDZK1IP1. May potentiate the CFTR chloride channel activity. Required for normal cell-surface expression of SCARB1. Plays a role in maintaining normal plasma cholesterol levels via its effects on SCARB1. Plays a role in the normal localization and function of the chloride-anion exchanger SLC26A6 to the plasma membrane in the brush border of the proximal tubule of the kidney. May be involved in the regulation of proximal tubular Na(+)-dependent inorganic phosphate cotransport therefore playing an important role in tubule function. The polypeptide is Na(+)/H(+) exchange regulatory cofactor NHE-RF3 (PDZK1) (Pongo abelii (Sumatran orangutan)).